We begin with the raw amino-acid sequence, 208 residues long: Large ribosomal subunit protein uL4 (208 aa).

The protein belongs to the universal ribosomal protein uL4 family. As to quaternary structure, part of the 50S ribosomal subunit.

Its function is as follows. One of the primary rRNA binding proteins, this protein initially binds near the 5'-end of the 23S rRNA. It is important during the early stages of 50S assembly. It makes multiple contacts with different domains of the 23S rRNA in the assembled 50S subunit and ribosome. In terms of biological role, forms part of the polypeptide exit tunnel. The sequence is that of Large ribosomal subunit protein uL4 from Solibacter usitatus (strain Ellin6076).